The following is a 330-amino-acid chain: Stearoyl-CoA desaturase 5 (330 aa).

At 1–49 (MPGPATDAGKIPFCDAKEEIRAGLESSEGGGGPERPGARGQRQNIVWRN) the chain is on the cytoplasmic side. A substrate-binding site is contributed by N49. Residues 50-70 (VVLMSLLHLGAVYSLVLIPKA) form a helical membrane-spanning segment. The Lumenal segment spans residues 71–72 (KP). A helical transmembrane segment spans residues 73 to 93 (LTLLWAYFCFLLAALGVTAGA). H94 and H99 together coordinate Fe cation. The Histidine box-1 signature appears at 94–99 (HRLWSH). At 94–193 (HRLWSHRSYR…VVRIQRKYYK (100 aa)) the chain is on the cytoplasmic side. 3 residues coordinate substrate: N122, R129, and D130. Residues H131, H134, and H135 each coordinate Fe cation. The short motif at 131 to 135 (HRAHH) is the Histidine box-2 element. R162 and K163 together coordinate substrate. The chain crosses the membrane as a helical span at residues 194-214 (ISVVLMCFVVPTLVPWYIWGE). Residue S215 is a topological domain, lumenal. Residues 216 to 238 (LWNSYFLASILRYTISLNISWLV) traverse the membrane as a helical segment. W236 lines the substrate pocket. At 239 to 330 (NSAAHMYGNR…RKARTGDSSA (92 aa)) the chain is on the cytoplasmic side. Residues H243, H272, H275, and H276 each coordinate Fe cation. A Histidine box-3 motif is present at residues 272 to 276 (HNYHH).

Belongs to the fatty acid desaturase type 1 family. In terms of assembly, may self-associate and form homodimers. The cofactor is Fe(2+). As to expression, detected in fetal brain, and at lower levels in fetal kidney. Detected in adult brain and pancreas, and at lower levels in kidney and lung. Expressed in spiral ganglion cells and the organ of Corti of fetal cochlea.

It is found in the endoplasmic reticulum membrane. It carries out the reaction octadecanoyl-CoA + 2 Fe(II)-[cytochrome b5] + O2 + 2 H(+) = (9Z)-octadecenoyl-CoA + 2 Fe(III)-[cytochrome b5] + 2 H2O. The enzyme catalyses hexadecanoyl-CoA + 2 Fe(II)-[cytochrome b5] + O2 + 2 H(+) = (9Z)-hexadecenoyl-CoA + 2 Fe(III)-[cytochrome b5] + 2 H2O. Stearoyl-CoA desaturase that utilizes O(2) and electrons from reduced cytochrome b5 to introduce the first double bond into saturated fatty acyl-CoA substrates. Catalyzes the insertion of a cis double bond at the delta-9 position into fatty acyl-CoA substrates including palmitoyl-CoA and stearoyl-CoA. Gives rise to a mixture of 16:1 and 18:1 unsaturated fatty acids. Involved in neuronal cell proliferation and differentiation through down-regulation of EGFR/AKT/MAPK and Wnt signaling pathways. This chain is Stearoyl-CoA desaturase 5 (SCD5), found in Homo sapiens (Human).